A 760-amino-acid polypeptide reads, in one-letter code: DEAD-box ATP-dependent RNA helicase 24 (760 aa).

Disordered stretches follow at residues 1–76 and 90–113; these read MSNR…GEVD and QEMK…DDDD. Over residues 14-27 the composition is skewed to polar residues; sequence NRQTSYSFERSQAP. The segment covering 41–64 has biased composition (acidic residues); that stretch reads NSEDADLDNIDYMENEEAEEDIEE. Over residues 99–109 the composition is skewed to basic and acidic residues; that stretch reads KPKEKLERYKD. At serine 160 the chain carries Phosphoserine. Residues 228–256 carry the Q motif motif; it reads KTFEDCGFSSQIMSAIKKQAYEKPTAIQC. The Helicase ATP-binding domain maps to 259 to 434; that stretch reads LPIVLSGRDV…REILSDPIRV (176 aa). 272–279 contributes to the ATP binding site; the sequence is AKTGSGKT. The DEAD box motif lies at 382–385; it reads DEAD. Residues 459–608 enclose the Helicase C-terminal domain; it reads KLPWLLEKLP…NVPPELTDLA (150 aa). Disordered regions lie at residues 604 to 638, 647 to 666, and 706 to 760; these read LTDL…KGVR, GFSS…SRSG, and FVSG…GWDN. Residues 615–628 show a composition bias toward basic residues; the sequence is KSKRDGRKGGKKGR. Positions 629–638 are enriched in gly residues; that stretch reads GGGGGNKGVR. Over residues 649–666 the composition is skewed to polar residues; that stretch reads SSESSRTPSSKAAPSRSG. The span at 707–716 shows a compositional bias: gly residues; sequence VSGGTIGGDM. The segment covering 718–732 has biased composition (polar residues); the sequence is RTQSQAPPVAPTQNA. The segment covering 733–745 has biased composition (low complexity); the sequence is SSHNSSQNHSQSS. Basic residues predominate over residues 750 to 760; sequence RERKRRSGWDN.

Belongs to the DEAD box helicase family.

It carries out the reaction ATP + H2O = ADP + phosphate + H(+). This Arabidopsis thaliana (Mouse-ear cress) protein is DEAD-box ATP-dependent RNA helicase 24 (RH24).